The chain runs to 612 residues: UvrABC system protein C (612 aa).

One can recognise a GIY-YIG domain in the interval 21–99; the sequence is HQPGVYRMYD…IKKYRPRYNV (79 aa). Residues 208–243 form the UVR domain; sequence QQVIDELMNKMEQASTDLDFERAARFRDQIAALRKT.

This sequence belongs to the UvrC family. In terms of assembly, interacts with UvrB in an incision complex.

The protein resides in the cytoplasm. In terms of biological role, the UvrABC repair system catalyzes the recognition and processing of DNA lesions. UvrC both incises the 5' and 3' sides of the lesion. The N-terminal half is responsible for the 3' incision and the C-terminal half is responsible for the 5' incision. This Idiomarina loihiensis (strain ATCC BAA-735 / DSM 15497 / L2-TR) protein is UvrABC system protein C.